The primary structure comprises 89 residues: Small ribosomal subunit protein uS15 (89 aa).

Belongs to the universal ribosomal protein uS15 family. As to quaternary structure, part of the 30S ribosomal subunit. Forms a bridge to the 50S subunit in the 70S ribosome, contacting the 23S rRNA.

In terms of biological role, one of the primary rRNA binding proteins, it binds directly to 16S rRNA where it helps nucleate assembly of the platform of the 30S subunit by binding and bridging several RNA helices of the 16S rRNA. Its function is as follows. Forms an intersubunit bridge (bridge B4) with the 23S rRNA of the 50S subunit in the ribosome. The sequence is that of Small ribosomal subunit protein uS15 from Shewanella sp. (strain ANA-3).